Reading from the N-terminus, the 1387-residue chain is MNISSMLSSDNNVSLKESMTTATDQQQQQQAESVDHASINGNGQTSVSAVNNVQENHLSEFHSSNQQHSSIPPVGTTVEHATTTTTTATNHQPVNSSPLKHSVDENSNPTTISSLKKDTNSIIASILPESYQFDNSYTPTIDQKYKSVFESNINVINQLDQYQQMGHHLKLMKFDEVKLNNYLINTGQFASNYIDRVVAEDISSRNNKISETNKNKELIAIDYSKPLHHNSTRGKEFKWGSTRKIHKVEHKSRRRKPAATTSTTDDSNKAVAAAANGTKDHSATAGTTASANGSDTPDRRHQRQSSKPSTPILIKPKTEPGKGSPEIQPRRSSRPKVKRKAFEDELETADKQSSTQQVKKSQESTGRDHKRVKIENKQEEQQQHQQQQQADEEDEAEAEAEAEQKPKSGALSEAAAAGMTAKEFKAFMRQYDNTYIAIWKDLSRKDGPKGSRSMQQATQGRLINLRKTALLAAREAKRWQLKNTKNQKDLTTKARRAMREMFNFWKRNERLERDLKKKHEKELLDKAKKEEEEREAKRQSRKLNFLITQTELYSHFIGKKIKTDELEGTNADDNLKSNTKEHLDKYADVDGSATHDINAVDFDNDDEEALRRMAAQNAQNALIEVQNKAKQFDNSEESFKNPDTNGEEMNFQNPTLLGDITIPQPNMLKCTLKEYQLKGLNWLANLYEQGINGILADEMGLGKTVQSISVLAYLAETYNMWGPFLVVTPASTLHNWQQEITKFVPEFKVLPYWGNAKDRKILRKFWDRKSLRYDKDSPFHVLVTSYQLIVADIAYFQKMKWQYMILDEAQAIKSSSSSRWKSLLNLTCRNRLLLTGTPIQNSMQELWALLHFIMPSIFDSHDEFSDWFAKDIESHAQSNTSLDEQQLRRLHMILKPFMLRRIKKNVQSELGDKVEIDVYCDLTTRQKKLYQQLRSQISMSDTDLLELESNSTSSDSSLANLVMQFRKVCNHPDLFERADVNSPFSFGKFAETGSFLRETNELDVNYSTENIVQYDLPRLIYDELLTPNYNKSIRDSIYSKFSIYNPENMNATGWLQGINVSPNELKHYSQMDILSRAIEMQNKPTETEKLERINYLYEGDYIPKNKKLLITDHSTSTNSSFISNSLVFSDLVSIKEKVGEDMYLNKLEPAVTPIASAPPITVNCSSMNFTNKMNNTLFDSNIRSSLIPLSLSTELKLMKDQIPLEQYPKSNMLPMPIFDYSNIRMPSMDRFIAESGKLAKLDELLIDLKRGGHRILIYFQMTRMMQIFEEYLAYKSYKYIRLDGSTTIESRREMVQAWQTNPEIFIFMLSTRAGGLGLNLTSADTVIFYDSDWNPTIDSQAMDRAHRIGQTKQVKVFRLVTRNTIEQKILERAKEKEEIQKLVVGNM.

Polar residues-rich tracts occupy residues 1-24 and 90-113; these read MNIS…TATD and NHQP…TTIS. Disordered stretches follow at residues 1–45, 85–113, and 230–414; these read MNIS…NGQT, TTTA…TTIS, and NSTR…LSEA. Positions 241-257 are enriched in basic residues; the sequence is STRKIHKVEHKSRRRKP. Positions 283 to 295 are enriched in low complexity; that stretch reads ATAGTTASANGSD. Residues 360 to 382 are compositionally biased toward basic and acidic residues; that stretch reads KSQESTGRDHKRVKIENKQEEQQ. A compositionally biased stretch (acidic residues) spans 390-401; the sequence is ADEEDEAEAEAE. Residues 438 to 563 form the DBINO domain; that stretch reads IWKDLSRKDG…SHFIGKKIKT (126 aa). Residues 480-551 adopt a coiled-coil conformation; sequence QLKNTKNQKD…KLNFLITQTE (72 aa). One can recognise a Helicase ATP-binding domain in the interval 684–856; sequence ANLYEQGING…WALLHFIMPS (173 aa). 697-704 provides a ligand contact to ATP; sequence DEMGLGKT. The short motif at 807–810 is the DEAQ box element; sequence DEAQ. The Helicase C-terminal domain occupies 1240–1387; sequence KLDELLIDLK…EIQKLVVGNM (148 aa).

The protein belongs to the SNF2/RAD54 helicase family. Component of the INO80 chromatin-remodeling complex.

It localises to the nucleus. The catalysed reaction is ATP + H2O = ADP + phosphate + H(+). Its function is as follows. ATPase component of the INO80 complex which remodels chromatin by shifting nucleosomes and is involved in DNA repair. The sequence is that of Chromatin-remodeling ATPase INO80 (INO80) from Candida albicans (strain SC5314 / ATCC MYA-2876) (Yeast).